Consider the following 433-residue polypeptide: MSKIVKVLGREIIDSRGNPTVEAEVHLEGGFVGMAAAPSGASTGSREALELRDGDKSRFLGKGVLKALAAVNGPIADALVGKDAKDQATIDQIMIDLDGTENKSNFGANAILAVSLANAKAAAAAKGMPLYEHIAELNGTPGVFSMPLPMMNIINGGEHADNNVDIQEFMIQPVGAKTLKEAVRMGAEVFHNLAKVLKSKGYNTAVGDEGGFAPNLKSNAEALEVIAEAVAAAGYKLGTDITLAMDCAASEFYDAEKKEYNLKGEGRIFTSNGFSDFLEELTEKFPIVSIEDGLDESDWEGFAYQTEKLGKKIQIVGDDLFVTNTKILKRGIDNGIANSILIKFNQIGSLTETLAAIKMAKDAGYTAVISHRSGETEDATIADLAVGTAAGQIKTGSMSRSDRVAKYNQLIRIEEALGSRAPFNGLKEVKGQA.

Glutamine 167 is a (2R)-2-phosphoglycerate binding site. Glutamate 209 (proton donor) is an active-site residue. 3 residues coordinate Mg(2+): aspartate 246, glutamate 291, and aspartate 318. 4 residues coordinate (2R)-2-phosphoglycerate: lysine 343, arginine 372, serine 373, and lysine 394. Lysine 343 functions as the Proton acceptor in the catalytic mechanism.

Belongs to the enolase family. Component of the RNA degradosome, a multiprotein complex involved in RNA processing and mRNA degradation. Mg(2+) serves as cofactor.

It localises to the cytoplasm. The protein localises to the secreted. It is found in the cell surface. The catalysed reaction is (2R)-2-phosphoglycerate = phosphoenolpyruvate + H2O. It participates in carbohydrate degradation; glycolysis; pyruvate from D-glyceraldehyde 3-phosphate: step 4/5. Catalyzes the reversible conversion of 2-phosphoglycerate (2-PG) into phosphoenolpyruvate (PEP). It is essential for the degradation of carbohydrates via glycolysis. This chain is Enolase, found in Vibrio cholerae serotype O1 (strain ATCC 39541 / Classical Ogawa 395 / O395).